A 1547-amino-acid polypeptide reads, in one-letter code: DNA topoisomerase 2 (1547 aa).

Residues 8–30 (FNKMSSPKQNGTGEPAPAKGQKG) are disordered. The span at 9–19 (NKMSSPKQNGT) shows a compositional bias: polar residues. ATP-binding positions include Asn99, Asn128, 156 to 158 (SSN), and 169 to 176 (GRNGYGAK). An interaction with DNA region spans residues 351 to 353 (KKK). Residue 385–387 (QTK) participates in ATP binding. The Toprim domain occupies 463 to 580 (CTLILTEGDS…ELLKLPFLEE (118 aa)). Positions 469, 549, and 551 each coordinate Mg(2+). The 470-residue stretch at 723–1192 (IPSMIDGLKP…TAPMLWREDL (470 aa)) folds into the Topo IIA-type catalytic domain. Tyr813 (O-(5'-phospho-DNA)-tyrosine intermediate) is an active-site residue. An interaction with DNA region spans residues 996-1005 (KLQTTISMTC). 4 disordered regions span residues 1107-1134 (TALEDDDAQESEEEEPEPDPKGKPVDPD), 1209-1249 (EELN…ISDD), 1261-1423 (KTRK…MDSD), and 1459-1547 (RQRR…SLSD). A compositionally biased stretch (acidic residues) spans 1109 to 1123 (LEDDDAQESEEEEPE). Residues 1124-1134 (PDPKGKPVDPD) show a composition bias toward basic and acidic residues. Residues 1216–1228 (KTSKAMAGKKNRK) show a composition bias toward basic residues. Composition is skewed to basic and acidic residues over residues 1238–1249 (NGRRVEPKISDD) and 1294–1315 (EKPEKAEKPDKVDKAEKTDGLK). Low complexity predominate over residues 1331–1344 (TFSGSSSGEMSASD). The segment covering 1373 to 1383 (DDSGSDSEPEL) has biased composition (acidic residues). Composition is skewed to basic and acidic residues over residues 1384 to 1394 (LDNKIDSDHEA) and 1459 to 1488 (RQRRCDTSVPPKEKAAPKRKLMNVDKDEKK). Over residues 1513-1528 (KGKKKTAANPKKKAKK) the composition is skewed to basic residues. A compositionally biased stretch (polar residues) spans 1537 to 1547 (DFNISDSSLSD).

It belongs to the type II topoisomerase family. Homodimer. It depends on Mg(2+) as a cofactor. Mn(2+) is required as a cofactor. The cofactor is Ca(2+).

It localises to the nucleus. The catalysed reaction is ATP-dependent breakage, passage and rejoining of double-stranded DNA.. Functionally, control of topological states of DNA by transient breakage and subsequent rejoining of DNA strands. Topoisomerase II makes double-strand breaks. The protein is DNA topoisomerase 2 (TOP2) of Bombyx mori (Silk moth).